A 1168-amino-acid chain; its full sequence is Transcription-repair-coupling factor (1168 aa).

Positions 633–794 (DMQKSRPMDR…MLGVRDLSVI (162 aa)) constitute a Helicase ATP-binding domain. 646–653 (GDVGYGKT) is an ATP binding site. A DEEQ box motif is present at residues 747–750 (DEEQ). In terms of domain architecture, Helicase C-terminal spans 808-969 (VLEQNMSFIK…GFKIAMRDLN (162 aa)).

The protein in the N-terminal section; belongs to the UvrB family. It in the C-terminal section; belongs to the helicase family. RecG subfamily.

The protein localises to the cytoplasm. Couples transcription and DNA repair by recognizing RNA polymerase (RNAP) stalled at DNA lesions. Mediates ATP-dependent release of RNAP and its truncated transcript from the DNA, and recruitment of nucleotide excision repair machinery to the damaged site. In Staphylococcus aureus (strain MRSA252), this protein is Transcription-repair-coupling factor.